We begin with the raw amino-acid sequence, 414 residues long: Glucose-1-phosphate adenylyltransferase (414 aa).

Residues G164, 181–182, and S199 contribute to the alpha-D-glucose 1-phosphate site; that span reads EK.

It belongs to the bacterial/plant glucose-1-phosphate adenylyltransferase family. In terms of assembly, homotetramer.

It carries out the reaction alpha-D-glucose 1-phosphate + ATP + H(+) = ADP-alpha-D-glucose + diphosphate. It participates in glycan biosynthesis; glycogen biosynthesis. Functionally, involved in the biosynthesis of ADP-glucose, a building block required for the elongation reactions to produce glycogen. Catalyzes the reaction between ATP and alpha-D-glucose 1-phosphate (G1P) to produce pyrophosphate and ADP-Glc. The protein is Glucose-1-phosphate adenylyltransferase of Leifsonia xyli subsp. xyli (strain CTCB07).